We begin with the raw amino-acid sequence, 914 residues long: Eukaryotic translation initiation factor 3 subunit C-like protein (914 aa).

The disordered stretch occupies residues 1-44 (MSRFFTTGSDSESESSLSGEELVTKPVGGNYGKQPLLLSEDEED). Residues 8–21 (GSDSESESSLSGEE) show a composition bias toward low complexity. Ser9, Ser11, Ser13, Ser15, Ser16, Ser18, and Ser39 each carry phosphoserine. An N6-acetyllysine modification is found at Lys99. Disordered stretches follow at residues 157–302 (TSYK…GGEW) and 523–543 (QLTP…NEGE). Phosphoserine occurs at positions 166, 178, 181, and 182. The segment covering 166–190 (SADEDAEKNEEDSEGSSDEDEDEDG) has biased composition (acidic residues). Basic and acidic residues predominate over residues 199 to 216 (KKSEAPSGESRKFLKKMD). The segment covering 217 to 232 (DEDEDSEDSEDDEDWD) has biased composition (acidic residues). Over residues 261–278 (PTTDEDKKAAEKKREDKA) the composition is skewed to basic and acidic residues. Over residues 291 to 300 (EEEEEDNEGG) the composition is skewed to acidic residues. Polar residues predominate over residues 523 to 532 (QLTPPEGSSK). Thr525 carries the phosphothreonine modification. Position 644 is an N6-acetyllysine (Lys644). The region spanning 674–850 (FHLHINLELL…QTVVMHRTEP (177 aa)) is the PCI domain. Positions 886–914 (FRDQKDGYRKNEGYMRRGGYRQQQSQTAY) are disordered. Residues 887-900 (RDQKDGYRKNEGYM) show a composition bias toward basic and acidic residues. A Phosphoserine modification is found at Ser910.

The protein belongs to the eIF-3 subunit C family. Component of the eukaryotic translation initiation factor 3 (eIF-3) complex, which is composed of 13 subunits: EIF3A, EIF3B, EIF3C, EIF3D, EIF3E, EIF3F, EIF3G, EIF3H, EIF3I, EIF3J, EIF3K, EIF3L and EIF3M. The eIF-3 complex appears to include 3 stable modules: module A is composed of EIF3A, EIF3B, EIF3G and EIF3I; module B is composed of EIF3F, EIF3H, and EIF3M; and module C is composed of EIF3C, EIF3D, EIF3E, EIF3K and EIF3L. EIF3C of module C binds EIF3B of module A and EIF3H of module B, thereby linking the three modules. EIF3J is a labile subunit that binds to the eIF-3 complex via EIF3B. The eIF-3 complex interacts with RPS6KB1 under conditions of nutrient depletion. Mitogenic stimulation leads to binding and activation of a complex composed of MTOR and RPTOR, leading to phosphorylation and release of RPS6KB1 and binding of EIF4B to eIF-3. Phosphorylated. Phosphorylation is enhanced upon serum stimulation.

The protein localises to the cytoplasm. Functionally, component of the eukaryotic translation initiation factor 3 (eIF-3) complex, which is required for several steps in the initiation of protein synthesis. The eIF-3 complex associates with the 40S ribosome and facilitates the recruitment of eIF-1, eIF-1A, eIF-2:GTP:methionyl-tRNAi and eIF-5 to form the 43S pre-initiation complex (43S PIC). The eIF-3 complex stimulates mRNA recruitment to the 43S PIC and scanning of the mRNA for AUG recognition. The eIF-3 complex is also required for disassembly and recycling of post-termination ribosomal complexes and subsequently prevents premature joining of the 40S and 60S ribosomal subunits prior to initiation. The eIF-3 complex specifically targets and initiates translation of a subset of mRNAs involved in cell proliferation, including cell cycling, differentiation and apoptosis, and uses different modes of RNA stem-loop binding to exert either translational activation or repression. The sequence is that of Eukaryotic translation initiation factor 3 subunit C-like protein (EIF3CL) from Homo sapiens (Human).